We begin with the raw amino-acid sequence, 307 residues long: Quinolinate synthase (307 aa).

Iminosuccinate-binding residues include His-20 and Ser-37. Cys-82 serves as a coordination point for [4Fe-4S] cluster. Residues 108–110 (YIN) and Ser-125 each bind iminosuccinate. Cys-168 provides a ligand contact to [4Fe-4S] cluster. Residues 194–196 (HPE) and Thr-219 contribute to the iminosuccinate site. Cys-264 is a [4Fe-4S] cluster binding site.

This sequence belongs to the quinolinate synthase family. Type 2 subfamily. Requires [4Fe-4S] cluster as cofactor.

It localises to the cytoplasm. It carries out the reaction iminosuccinate + dihydroxyacetone phosphate = quinolinate + phosphate + 2 H2O + H(+). Its pathway is cofactor biosynthesis; NAD(+) biosynthesis; quinolinate from iminoaspartate: step 1/1. Functionally, catalyzes the condensation of iminoaspartate with dihydroxyacetone phosphate to form quinolinate. This chain is Quinolinate synthase, found in Pyrobaculum aerophilum (strain ATCC 51768 / DSM 7523 / JCM 9630 / CIP 104966 / NBRC 100827 / IM2).